A 104-amino-acid polypeptide reads, in one-letter code: Naphthalene 1,2-dioxygenase/salicylate 5-hydroxylase systems, ferredoxin component (104 aa).

Residues 6–101 (IDAACLDDIP…VKIENMRVML (96 aa)) form the Rieske domain. Cys45, His47, Cys64, and His67 together coordinate [2Fe-2S] cluster.

Belongs to the bacterial ring-hydroxylating dioxygenase ferredoxin component family. In terms of assembly, ferredoxin NagAb belongs to both the salicylate 5-hydroxylase (S5H) and the naphthalene 1,2-dioxygenase (NDO) multicomponent enzyme systems. The NDO multicomponent enzyme system is composed of an electron transfer component and a dioxygenase component (iron sulfur protein (ISP)). The electron transfer component is composed of a ferredoxin reductase (NagAa) and a ferredoxin (NagAb), and the dioxygenase component is formed by a large alpha subunit (NagAc) and a small beta subunit (NagAd). The S5H multicomponent enzyme system is composed of an electron transfer component and a monooxygenase component. The electron transfer component is composed of a ferredoxin reductase (NagAa) and a ferredoxin (NagAb), and the monooxygenase component is formed by a large subunit (NagG) and a small subunit (NagH). Requires [2Fe-2S] cluster as cofactor.

It functions in the pathway aromatic compound metabolism; naphthalene degradation. Functionally, component of two multicomponent enzyme systems which are involved in the catabolism of naphthalene. Plays a role as an electron transfer component for both salicylate 5-hydroxylase (S5H) and naphthalene 1,2-dioxygenase (NDO) systems, by transferring electrons to the oxygenase components. The sequence is that of Naphthalene 1,2-dioxygenase/salicylate 5-hydroxylase systems, ferredoxin component from Ralstonia sp.